The sequence spans 109 residues: MTLIEQIITIGICIVAVQFTRLLPFFVFPVNRPIPQYIRYLGKVLPPAMFGMLVVYCYKNIEILTGYHGIPDLLAGIVVLGLHFWKKNMFLSIAVGTLFYMALVQLIFI.

3 helical membrane passes run 7 to 27, 37 to 57, and 63 to 83; these read IITI…PFFV, YIRY…VVYC, and ILTG…LGLH.

It belongs to the AzlD/HI_1737/HP1330 family.

The protein resides in the cell membrane. This is an uncharacterized protein from Haemophilus influenzae (strain ATCC 51907 / DSM 11121 / KW20 / Rd).